We begin with the raw amino-acid sequence, 417 residues long: UDP-N-acetylglucosamine 1-carboxyvinyltransferase (417 aa).

Residue 22 to 23 participates in phosphoenolpyruvate binding; the sequence is KN. UDP-N-acetyl-alpha-D-glucosamine is bound at residue Arg93. The Proton donor role is filled by Cys117. Cys117 is subject to 2-(S-cysteinyl)pyruvic acid O-phosphothioketal. Residues 122-126, Asp305, and Ile327 each bind UDP-N-acetyl-alpha-D-glucosamine; that span reads RPVDQ.

The protein belongs to the EPSP synthase family. MurA subfamily.

It localises to the cytoplasm. It carries out the reaction phosphoenolpyruvate + UDP-N-acetyl-alpha-D-glucosamine = UDP-N-acetyl-3-O-(1-carboxyvinyl)-alpha-D-glucosamine + phosphate. It participates in cell wall biogenesis; peptidoglycan biosynthesis. Functionally, cell wall formation. Adds enolpyruvyl to UDP-N-acetylglucosamine. The chain is UDP-N-acetylglucosamine 1-carboxyvinyltransferase from Chromobacterium violaceum (strain ATCC 12472 / DSM 30191 / JCM 1249 / CCUG 213 / NBRC 12614 / NCIMB 9131 / NCTC 9757 / MK).